The chain runs to 101 residues: Toxin Tpa8 (101 aa).

Residues 1–20 (MVKSEMKLVIFSLFLLLIGV) form the signal peptide. One can recognise an LCN-type CS-alpha/beta domain in the interval 24–98 (KNGYPVIEGG…VMDRTKEYCE (75 aa)). 4 disulfides stabilise this stretch: Cys44–Cys70, Cys56–Cys75, Cys60–Cys77, and Cys71–Cys97.

Belongs to the long (4 C-C) scorpion toxin superfamily. Sodium channel inhibitor family. Beta subfamily. Expressed by the venom gland.

It is found in the secreted. Excitatory insect beta-toxins induce a spastic paralysis. They bind voltage-independently at site-4 of sodium channels (Nav) and shift the voltage of activation toward more negative potentials thereby affecting sodium channel activation and promoting spontaneous and repetitive firing. The polypeptide is Toxin Tpa8 (Tityus pachyurus (Colombian scorpion)).